Reading from the N-terminus, the 181-residue chain is Acireductone dioxygenase (181 aa).

Fe(2+)-binding residues include His-97, His-99, Glu-103, and His-141. Residues His-97, His-99, Glu-103, and His-141 each coordinate Ni(2+).

It belongs to the acireductone dioxygenase (ARD) family. In terms of assembly, monomer. Fe(2+) is required as a cofactor. Ni(2+) serves as cofactor.

The enzyme catalyses 1,2-dihydroxy-5-(methylsulfanyl)pent-1-en-3-one + O2 = 3-(methylsulfanyl)propanoate + CO + formate + 2 H(+). It catalyses the reaction 1,2-dihydroxy-5-(methylsulfanyl)pent-1-en-3-one + O2 = 4-methylsulfanyl-2-oxobutanoate + formate + 2 H(+). It functions in the pathway amino-acid biosynthesis; L-methionine biosynthesis via salvage pathway; L-methionine from S-methyl-5-thio-alpha-D-ribose 1-phosphate: step 5/6. Functionally, catalyzes 2 different reactions between oxygen and the acireductone 1,2-dihydroxy-3-keto-5-methylthiopentene (DHK-MTPene) depending upon the metal bound in the active site. Fe-containing acireductone dioxygenase (Fe-ARD) produces formate and 2-keto-4-methylthiobutyrate (KMTB), the alpha-ketoacid precursor of methionine in the methionine recycle pathway. Ni-containing acireductone dioxygenase (Ni-ARD) produces methylthiopropionate, carbon monoxide and formate, and does not lie on the methionine recycle pathway. In Stutzerimonas stutzeri (strain A1501) (Pseudomonas stutzeri), this protein is Acireductone dioxygenase.